The sequence spans 279 residues: MTQRMDKRFADLKEEGRPALVTYFMGGDPDFETSLAIMKALPQAGADVIELGMPFSDPMADGPAIQMAGQRALKAGQTLVKTLDMAREFRKGDQATPIVMMGYYNPIYVYGVEKFLDDALDAGIDGLIVVDLPPEMDDELCLPARKRDINFIRLATPTTDEKRLPMVLQNTSGFVYYVSMNGITGSALPDPSKVAGAVGRIKAHTDLPICVGFGVKTAEHARLIGASADGVVVGTAIVNQVALSLTKDDKATADTVQSVVTLVRGLASGVQTARLAAAQ.

Catalysis depends on proton acceptor residues E50 and D61.

Belongs to the TrpA family. Tetramer of two alpha and two beta chains.

The catalysed reaction is (1S,2R)-1-C-(indol-3-yl)glycerol 3-phosphate + L-serine = D-glyceraldehyde 3-phosphate + L-tryptophan + H2O. The protein operates within amino-acid biosynthesis; L-tryptophan biosynthesis; L-tryptophan from chorismate: step 5/5. Functionally, the alpha subunit is responsible for the aldol cleavage of indoleglycerol phosphate to indole and glyceraldehyde 3-phosphate. The protein is Tryptophan synthase alpha chain of Allorhizobium ampelinum (strain ATCC BAA-846 / DSM 112012 / S4) (Agrobacterium vitis (strain S4)).